A 215-amino-acid polypeptide reads, in one-letter code: Protein-methionine-sulfoxide reductase heme-binding subunit MsrQ (215 aa).

Helical transmembrane passes span Ala-17–Ala-37, Phe-50–Pro-70, Ala-85–Asp-105, Pro-121–Asn-141, Trp-152–Leu-172, and Ile-177–Val-197.

The protein belongs to the MsrQ family. Heterodimer of a catalytic subunit (MsrP) and a heme-binding subunit (MsrQ). It depends on FMN as a cofactor. Heme b is required as a cofactor.

The protein resides in the cell inner membrane. Part of the MsrPQ system that repairs oxidized periplasmic proteins containing methionine sulfoxide residues (Met-O), using respiratory chain electrons. Thus protects these proteins from oxidative-stress damage caused by reactive species of oxygen and chlorine generated by the host defense mechanisms. MsrPQ is essential for the maintenance of envelope integrity under bleach stress, rescuing a wide series of structurally unrelated periplasmic proteins from methionine oxidation. MsrQ provides electrons for reduction to the reductase catalytic subunit MsrP, using the quinone pool of the respiratory chain. In Agrobacterium fabrum (strain C58 / ATCC 33970) (Agrobacterium tumefaciens (strain C58)), this protein is Protein-methionine-sulfoxide reductase heme-binding subunit MsrQ.